Consider the following 166-residue polypeptide: Small ribosomal subunit protein uS5 (166 aa).

The 64-residue stretch at 11-74 folds into the S5 DRBM domain; it reads LREKLVAINR…EKARANMKRV (64 aa).

This sequence belongs to the universal ribosomal protein uS5 family. As to quaternary structure, part of the 30S ribosomal subunit. Contacts proteins S4 and S8.

Functionally, with S4 and S12 plays an important role in translational accuracy. Its function is as follows. Located at the back of the 30S subunit body where it stabilizes the conformation of the head with respect to the body. The chain is Small ribosomal subunit protein uS5 from Alkalilimnicola ehrlichii (strain ATCC BAA-1101 / DSM 17681 / MLHE-1).